Reading from the N-terminus, the 275-residue chain is Ribosomal RNA small subunit methyltransferase A (275 aa).

Positions 21, 23, 48, 69, 94, and 115 each coordinate S-adenosyl-L-methionine.

The protein belongs to the class I-like SAM-binding methyltransferase superfamily. rRNA adenine N(6)-methyltransferase family. RsmA subfamily.

The protein resides in the cytoplasm. It catalyses the reaction adenosine(1518)/adenosine(1519) in 16S rRNA + 4 S-adenosyl-L-methionine = N(6)-dimethyladenosine(1518)/N(6)-dimethyladenosine(1519) in 16S rRNA + 4 S-adenosyl-L-homocysteine + 4 H(+). Functionally, specifically dimethylates two adjacent adenosines (A1518 and A1519) in the loop of a conserved hairpin near the 3'-end of 16S rRNA in the 30S particle. May play a critical role in biogenesis of 30S subunits. This chain is Ribosomal RNA small subunit methyltransferase A, found in Clostridium botulinum (strain Loch Maree / Type A3).